The following is a 286-amino-acid chain: Energy-coupling factor transporter ATP-binding protein EcfA2 (286 aa).

Residues 3–246 (IRFDNVSYTY…KEKLADWHIG (244 aa)) form the ABC transporter domain. 40–47 (GQTGSGKS) lines the ATP pocket.

Belongs to the ABC transporter superfamily. Energy-coupling factor EcfA family. As to quaternary structure, forms a stable energy-coupling factor (ECF) transporter complex composed of 2 membrane-embedded substrate-binding proteins (S component), 2 ATP-binding proteins (A component) and 2 transmembrane proteins (T component).

It localises to the cell membrane. In terms of biological role, ATP-binding (A) component of a common energy-coupling factor (ECF) ABC-transporter complex. Unlike classic ABC transporters this ECF transporter provides the energy necessary to transport a number of different substrates. The polypeptide is Energy-coupling factor transporter ATP-binding protein EcfA2 (Staphylococcus aureus (strain MRSA252)).